Here is a 183-residue protein sequence, read N- to C-terminus: Putative 3-methyladenine DNA glycosylase (183 aa).

The protein belongs to the DNA glycosylase MPG family.

This chain is Putative 3-methyladenine DNA glycosylase, found in Wolbachia pipientis subsp. Culex pipiens (strain wPip).